A 156-amino-acid polypeptide reads, in one-letter code: Small ribosomal subunit protein uS7 (156 aa).

This sequence belongs to the universal ribosomal protein uS7 family. Part of the 30S ribosomal subunit. Contacts proteins S9 and S11.

In terms of biological role, one of the primary rRNA binding proteins, it binds directly to 16S rRNA where it nucleates assembly of the head domain of the 30S subunit. Is located at the subunit interface close to the decoding center, probably blocks exit of the E-site tRNA. The protein is Small ribosomal subunit protein uS7 of Beutenbergia cavernae (strain ATCC BAA-8 / DSM 12333 / CCUG 43141 / JCM 11478 / NBRC 16432 / NCIMB 13614 / HKI 0122).